The following is a 212-amino-acid chain: Cyclin-dependent kinase inhibitor 3 (212 aa).

Residues 1-24 (MKPPISIQASEFDSSDEEPADDEQ) form a disordered region. The interval 1–34 (MKPPISIQASEFDSSDEEPADDEQTPIQISWLPL) is interaction with CDK2. Over residues 13 to 24 (DSSDEEPADDEQ) the composition is skewed to acidic residues. The 170-residue stretch at 32–201 (LPLSRVNCSQ…FRDKLAAYLS (170 aa)) folds into the Tyrosine-protein phosphatase domain. The Phosphocysteine intermediate role is filled by Cys-140.

Belongs to the protein-tyrosine phosphatase family. Interacts with cyclin-dependent kinases such as CDK1, CDK2 and CDK3. Does not interact with CDK4. Interacts (via C-terminus) with phosphorylated CDK2 (via C-terminal helix). Interacts with MS4A3 (via C-terminus); the interaction enhances CDKN3 enzymatic activity.

The protein resides in the cytoplasm. The protein localises to the perinuclear region. It catalyses the reaction O-phospho-L-tyrosyl-[protein] + H2O = L-tyrosyl-[protein] + phosphate. The enzyme catalyses O-phospho-L-seryl-[protein] + H2O = L-seryl-[protein] + phosphate. The catalysed reaction is O-phospho-L-threonyl-[protein] + H2O = L-threonyl-[protein] + phosphate. Functionally, may play a role in cell cycle regulation. Dual specificity phosphatase active toward substrates containing either phosphotyrosine or phosphoserine residues. Dephosphorylates CDK2 at 'Thr-160' in a cyclin-dependent manner. This chain is Cyclin-dependent kinase inhibitor 3, found in Rattus norvegicus (Rat).